A 419-amino-acid polypeptide reads, in one-letter code: Effector protein BipC (419 aa).

Disordered regions lie at residues 62–91 (VAGS…TVSG) and 338–402 (LQSG…AKSQ). 2 stretches are compositionally biased toward basic and acidic residues: residues 71–91 (ELAR…TVSG) and 380–392 (TRDE…REAA).

Belongs to the SctB/SipC family.

Its subcellular location is the secreted. The polypeptide is Effector protein BipC (bipC) (Burkholderia mallei (strain NCTC 10247)).